The following is a 478-amino-acid chain: Uronate isomerase (478 aa).

This sequence belongs to the metallo-dependent hydrolases superfamily. Uronate isomerase family.

It carries out the reaction D-glucuronate = D-fructuronate. It catalyses the reaction aldehydo-D-galacturonate = keto-D-tagaturonate. The protein operates within carbohydrate metabolism; pentose and glucuronate interconversion. In Bacillus pumilus (strain SAFR-032), this protein is Uronate isomerase.